Consider the following 122-residue polypeptide: Small ribosomal subunit protein uS12 (122 aa).

D89 bears the 3-methylthioaspartic acid mark.

It belongs to the universal ribosomal protein uS12 family. In terms of assembly, part of the 30S ribosomal subunit. Contacts proteins S8 and S17. May interact with IF1 in the 30S initiation complex.

With S4 and S5 plays an important role in translational accuracy. Functionally, interacts with and stabilizes bases of the 16S rRNA that are involved in tRNA selection in the A site and with the mRNA backbone. Located at the interface of the 30S and 50S subunits, it traverses the body of the 30S subunit contacting proteins on the other side and probably holding the rRNA structure together. The combined cluster of proteins S8, S12 and S17 appears to hold together the shoulder and platform of the 30S subunit. The chain is Small ribosomal subunit protein uS12 from Neorickettsia sennetsu (strain ATCC VR-367 / Miyayama) (Ehrlichia sennetsu).